A 259-amino-acid chain; its full sequence is Bis(5'-nucleosyl)-tetraphosphatase, symmetrical (259 aa).

It belongs to the Ap4A hydrolase family.

The catalysed reaction is P(1),P(4)-bis(5'-adenosyl) tetraphosphate + H2O = 2 ADP + 2 H(+). In terms of biological role, hydrolyzes diadenosine 5',5'''-P1,P4-tetraphosphate to yield ADP. The polypeptide is Bis(5'-nucleosyl)-tetraphosphatase, symmetrical (apaH) (Klebsiella aerogenes (Enterobacter aerogenes)).